The sequence spans 281 residues: NAD kinase (281 aa).

The Proton acceptor role is filled by Asp61. Residues 61-62 (DG), 134-135 (ND), Arg145, Asp164, 175-180 (TAYSLS), and Gln234 each bind NAD(+).

It belongs to the NAD kinase family. A divalent metal cation serves as cofactor.

It localises to the cytoplasm. It carries out the reaction NAD(+) + ATP = ADP + NADP(+) + H(+). Its function is as follows. Involved in the regulation of the intracellular balance of NAD and NADP, and is a key enzyme in the biosynthesis of NADP. Catalyzes specifically the phosphorylation on 2'-hydroxyl of the adenosine moiety of NAD to yield NADP. The polypeptide is NAD kinase (Clostridium botulinum (strain Kyoto / Type A2)).